Consider the following 249-residue polypeptide: Testis-expressed protein 101 (249 aa).

The signal sequence occupies residues 1-25 (MGTPRIQHLLILLVLGASLLTSGLE). N-linked (GlcNAc...) asparagine glycosylation is found at Asn-45 and Asn-159. Positions 140-211 (CPTCVALGTC…PMFVREACPH (72 aa)) constitute a UPAR/Ly6 domain. A lipid anchor (GPI-anchor amidated asparagine) is attached at Asn-222. Positions 223 to 249 (GATCLPIPVWGLQLLLPLLLPSFIHFS) are cleaved as a propeptide — removed in mature form.

In terms of assembly, interacts with VAMP3. Interacts with LY6K. Interacts with DPEP3; co-localized on the cell surface of spermatocytes, spermatids, and testicular spermatozoa, co-localized only in cytoplasmic droplets of caput and corpus epididymal sperm. Interacts with ADAM5. In terms of processing, N-glycosylated; by high mannose and/or biantennary complex and/or certain types of hybrid oligosaccharides; possesses different oligosaccharides chains according to its subcellular localization in the testis. Sheds from membrane raft by ACE and released from the cell surface of epididymal sperm while it passes through the caput epididymis leading to disappearance of TEX101 on spermatozoa; is essential to produce fertile spermatozoa. In terms of tissue distribution, detected in testis and spermatogonia. Not detected in spermatocytes. Detected in blood leukocytes.

The protein resides in the cell membrane. It is found in the membrane raft. The protein localises to the cytoplasmic vesicle. It localises to the secretory vesicle. Its subcellular location is the acrosome. The protein resides in the secreted. Its function is as follows. Plays a role in fertilization by controlling binding of sperm to zona pellucida and migration of spermatozoa into the oviduct. May play a role in signal transduction and promote protein tyrosine phosphorylation. This is Testis-expressed protein 101 from Homo sapiens (Human).